Here is a 249-residue protein sequence, read N- to C-terminus: Type III pantothenate kinase (249 aa).

Residue 6 to 13 (DIGNSRTK) coordinates ATP. Substrate-binding positions include Tyr-89 and 96 to 99 (GIDR). Catalysis depends on Asp-98, which acts as the Proton acceptor. K(+) is bound at residue Asp-119. Thr-122 is an ATP binding site. A substrate-binding site is contributed by Thr-174.

Belongs to the type III pantothenate kinase family. In terms of assembly, homodimer. NH4(+) is required as a cofactor. The cofactor is K(+).

The protein resides in the cytoplasm. It catalyses the reaction (R)-pantothenate + ATP = (R)-4'-phosphopantothenate + ADP + H(+). The protein operates within cofactor biosynthesis; coenzyme A biosynthesis; CoA from (R)-pantothenate: step 1/5. Functionally, catalyzes the phosphorylation of pantothenate (Pan), the first step in CoA biosynthesis. This chain is Type III pantothenate kinase, found in Colwellia psychrerythraea (strain 34H / ATCC BAA-681) (Vibrio psychroerythus).